The primary structure comprises 336 residues: Glycerol-3-phosphate dehydrogenase [NAD(P)+] (336 aa).

Residues tryptophan 11, arginine 33, and lysine 105 each contribute to the NADPH site. Sn-glycerol 3-phosphate-binding residues include lysine 105, glycine 141, and serine 143. Alanine 145 contributes to the NADPH binding site. The sn-glycerol 3-phosphate site is built by lysine 196, aspartate 249, serine 259, arginine 260, and asparagine 261. Lysine 196 acts as the Proton acceptor in catalysis. Arginine 260 is a binding site for NADPH. Residues valine 284 and glutamate 286 each coordinate NADPH.

This sequence belongs to the NAD-dependent glycerol-3-phosphate dehydrogenase family.

The protein resides in the cytoplasm. It carries out the reaction sn-glycerol 3-phosphate + NAD(+) = dihydroxyacetone phosphate + NADH + H(+). It catalyses the reaction sn-glycerol 3-phosphate + NADP(+) = dihydroxyacetone phosphate + NADPH + H(+). It participates in membrane lipid metabolism; glycerophospholipid metabolism. In terms of biological role, catalyzes the reduction of the glycolytic intermediate dihydroxyacetone phosphate (DHAP) to sn-glycerol 3-phosphate (G3P), the key precursor for phospholipid synthesis. This is Glycerol-3-phosphate dehydrogenase [NAD(P)+] from Delftia acidovorans (strain DSM 14801 / SPH-1).